The sequence spans 861 residues: Leucine--tRNA ligase (861 aa).

Positions 43–53 match the 'HIGH' region motif; that stretch reads PYPSGKLHMGH. The short motif at 588-592 is the 'KMSKS' region element; that stretch reads KMSKS. Lysine 591 provides a ligand contact to ATP.

This sequence belongs to the class-I aminoacyl-tRNA synthetase family.

It localises to the cytoplasm. The catalysed reaction is tRNA(Leu) + L-leucine + ATP = L-leucyl-tRNA(Leu) + AMP + diphosphate. In Symbiobacterium thermophilum (strain DSM 24528 / JCM 14929 / IAM 14863 / T), this protein is Leucine--tRNA ligase.